The sequence spans 196 residues: Recombination protein RecR (196 aa).

A C4-type zinc finger spans residues 57-72 (CERCNTFTEAPVCSTC). The Toprim domain occupies 80-175 (RQLCVVETPA…SVTRLARGVP (96 aa)).

It belongs to the RecR family.

May play a role in DNA repair. It seems to be involved in an RecBC-independent recombinational process of DNA repair. It may act with RecF and RecO. This Methylibium petroleiphilum (strain ATCC BAA-1232 / LMG 22953 / PM1) protein is Recombination protein RecR.